Reading from the N-terminus, the 269-residue chain is MGRSPCCEKEHMNKGAWTKEEDERLVSYIKSHGEGCWRSLPRAAGLLRCGKSCRLRWINYLRPDLKRGNFTHDEDELIIKLHSLLGNKWSLIAARLPGRTDNEIKNYWNTHIKRKLLSKGIDPATHRGINEAKISDLKKTKDQIVKDVSFVTKFEETDKSGDQKQNKYIRNGLVCKEERVVVEEKIGPDLNLELRISPPWQNQREISTCTASRFYMENDMECSSETVKCQTENSSSISYSSIDISSSNVGYDFLGLKTRILDFRSLEMK.

2 consecutive HTH myb-type domains span residues 9 to 61 (KEHM…INYL) and 62 to 116 (RPDL…KRKL). DNA-binding regions (H-T-H motif) lie at residues 37–61 (WRSLPRAAGLLRCGKSCRLRWINYL) and 89–112 (WSLIAARLPGRTDNEIKNYWNTHI).

As to quaternary structure, interacts with SAD2. As to expression, expressed in anthers. Expressed in pollen grains and mature seeds. Expressed in roots and vasculature of leaves.

It is found in the nucleus. Functionally, transcription factor involved in the negative regulation of flavonol biosynthesis. Represses the early phenylpropanoid genes, phenylalanine ammonia-lyase (PAL), cinnamate 4-hydroxylase (C4H) and 4-coumarate-CoA ligase (4CL), as well as the flavonoid-specific genes, flavonoid 3'-hydroxylase (F3'H) and dihydroflavonol 4-reductase (DFR). Plays a role in seed germination inhibition. Negatively regulates the expression of the abscisic acid (ABA) signaling transcription factor ABI5 in seeds. The protein is Transcription factor MYB7 of Arabidopsis thaliana (Mouse-ear cress).